The chain runs to 245 residues: tRNA (guanine-N(1)-)-methyltransferase (245 aa).

S-adenosyl-L-methionine-binding positions include Gly-112 and 132–137; that span reads IGDFVL.

The protein belongs to the RNA methyltransferase TrmD family. In terms of assembly, homodimer.

Its subcellular location is the cytoplasm. The enzyme catalyses guanosine(37) in tRNA + S-adenosyl-L-methionine = N(1)-methylguanosine(37) in tRNA + S-adenosyl-L-homocysteine + H(+). Its function is as follows. Specifically methylates guanosine-37 in various tRNAs. This Geobacter sulfurreducens (strain ATCC 51573 / DSM 12127 / PCA) protein is tRNA (guanine-N(1)-)-methyltransferase.